A 329-amino-acid polypeptide reads, in one-letter code: Anthranilate phosphoribosyltransferase (329 aa).

5-phospho-alpha-D-ribose 1-diphosphate-binding positions include Gly-78, 81-82 (GD), Thr-86, 88-91 (NLST), 106-114 (KHGNRSASG), and Ser-118. Gly-78 contributes to the anthranilate binding site. Position 90 (Ser-90) interacts with Mg(2+). Residue Asn-109 coordinates anthranilate. Arg-164 contacts anthranilate. Positions 221 and 222 each coordinate Mg(2+).

Belongs to the anthranilate phosphoribosyltransferase family. Homodimer. The cofactor is Mg(2+).

The enzyme catalyses N-(5-phospho-beta-D-ribosyl)anthranilate + diphosphate = 5-phospho-alpha-D-ribose 1-diphosphate + anthranilate. It participates in amino-acid biosynthesis; L-tryptophan biosynthesis; L-tryptophan from chorismate: step 2/5. Functionally, catalyzes the transfer of the phosphoribosyl group of 5-phosphorylribose-1-pyrophosphate (PRPP) to anthranilate to yield N-(5'-phosphoribosyl)-anthranilate (PRA). This Pyrobaculum islandicum (strain DSM 4184 / JCM 9189 / GEO3) protein is Anthranilate phosphoribosyltransferase.